Here is a 135-residue protein sequence, read N- to C-terminus: ATP synthase epsilon chain (135 aa).

Belongs to the ATPase epsilon chain family. F-type ATPases have 2 components, CF(1) - the catalytic core - and CF(0) - the membrane proton channel. CF(1) has five subunits: alpha(3), beta(3), gamma(1), delta(1), epsilon(1). CF(0) has three main subunits: a, b and c.

Its subcellular location is the cell inner membrane. Functionally, produces ATP from ADP in the presence of a proton gradient across the membrane. This is ATP synthase epsilon chain from Rhizobium rhizogenes (strain K84 / ATCC BAA-868) (Agrobacterium radiobacter).